The chain runs to 44 residues: Photosystem I reaction center subunit IX (44 aa).

The helical transmembrane segment at 7–27 (YLSVAPVVSTIWFGALAGLLI) threads the bilayer.

The protein belongs to the PsaJ family.

Its subcellular location is the plastid. The protein localises to the chloroplast thylakoid membrane. Functionally, may help in the organization of the PsaE and PsaF subunits. This is Photosystem I reaction center subunit IX from Cucumis sativus (Cucumber).